A 52-amino-acid polypeptide reads, in one-letter code: ATP synthase F(0) complex subunit 8 (52 aa).

A helical transmembrane segment spans residues 10–30 (LMTHLWAWLMLYLTTQKIKTF).

The protein belongs to the ATPase protein 8 family. Component of the ATP synthase complex composed at least of ATP5F1A/subunit alpha, ATP5F1B/subunit beta, ATP5MC1/subunit c (homooctomer), MT-ATP6/subunit a, MT-ATP8/subunit 8, ATP5ME/subunit e, ATP5MF/subunit f, ATP5MG/subunit g, ATP5MK/subunit k, ATP5MJ/subunit j, ATP5F1C/subunit gamma, ATP5F1D/subunit delta, ATP5F1E/subunit epsilon, ATP5PF/subunit F6, ATP5PB/subunit b, ATP5PD/subunit d, ATP5PO/subunit OSCP. ATP synthase complex consists of a soluble F(1) head domain (subunits alpha(3) and beta(3)) - the catalytic core - and a membrane F(0) domain - the membrane proton channel (subunits c, a, 8, e, f, g, k and j). These two domains are linked by a central stalk (subunits gamma, delta, and epsilon) rotating inside the F1 region and a stationary peripheral stalk (subunits F6, b, d, and OSCP).

It localises to the mitochondrion membrane. Functionally, subunit 8, of the mitochondrial membrane ATP synthase complex (F(1)F(0) ATP synthase or Complex V) that produces ATP from ADP in the presence of a proton gradient across the membrane which is generated by electron transport complexes of the respiratory chain. ATP synthase complex consist of a soluble F(1) head domain - the catalytic core - and a membrane F(1) domain - the membrane proton channel. These two domains are linked by a central stalk rotating inside the F(1) region and a stationary peripheral stalk. During catalysis, ATP synthesis in the catalytic domain of F(1) is coupled via a rotary mechanism of the central stalk subunits to proton translocation. In vivo, can only synthesize ATP although its ATP hydrolase activity can be activated artificially in vitro. Part of the complex F(0) domain. In Lycodon semicarinatus (Ryukyu odd-tooth snake), this protein is ATP synthase F(0) complex subunit 8.